We begin with the raw amino-acid sequence, 771 residues long: Protein translocase subunit SecA 2 (771 aa).

Residues Gln91, 109-113 (GEGKT), and Asp496 contribute to the ATP site.

Belongs to the SecA family. Monomer and homodimer. Part of the essential Sec protein translocation apparatus which comprises SecA, SecYEG and auxiliary proteins SecDF. Other proteins may also be involved.

Its subcellular location is the cell membrane. The protein resides in the cytoplasm. It carries out the reaction ATP + H2O + cellular proteinSide 1 = ADP + phosphate + cellular proteinSide 2.. In terms of biological role, part of the Sec protein translocase complex. Interacts with the SecYEG preprotein conducting channel. Has a central role in coupling the hydrolysis of ATP to the transfer of proteins into and across the cell membrane, serving as an ATP-driven molecular motor driving the stepwise translocation of polypeptide chains across the membrane. The protein is Protein translocase subunit SecA 2 of Corynebacterium jeikeium (strain K411).